A 742-amino-acid polypeptide reads, in one-letter code: Collectin-12 (742 aa).

Over 1-37 the chain is Cytoplasmic; that stretch reads MKDDFAEEEEVQSFGYKRFGIQEGTQCTKCKNNWALK. Residues 38-58 traverse the membrane as a helical; Signal-anchor for type II membrane protein segment; it reads FSIILLYVLCALLTITVAILG. The Extracellular portion of the chain corresponds to 59 to 742; the sequence is YKVVEKMDTV…EREAVPSSIL (684 aa). Positions 104–142 form a coiled coil; it reads TNSELSTFRSDILDLRQQLQEITEKTSKNKDMLEKLQAN. N-linked (GlcNAc...) asparagine glycans are attached at residues Asn-159, Asn-168, and Asn-271. The stretch at 220–301 forms a coiled coil; that stretch reads ITNLQRSVDD…SFTGQMDNIT (82 aa). Residues 439–608 form a disordered region; that stretch reads TILQGPPGPR…TPASEVNGCP (170 aa). Collagen-like domains follow at residues 452-511 and 527-586; these read GDRG…KGSR and GPPG…PGPS. The span at 501–514 shows a compositional bias: low complexity; it reads SKGSQGPKGSRGSP. A compositionally biased stretch (pro residues) spans 516 to 532; sequence KPGPQGPSGDPGPPGPP. The segment covering 534-556 has biased composition (low complexity); that stretch reads KDGLPGPQGPPGFQGLQGTVGEP. The segment covering 571–585 has biased composition (pro residues); that stretch reads PGMPGPKGPPGPPGP. Intrachain disulfides connect Cys-607–Cys-618, Cys-635–Cys-730, and Cys-708–Cys-722. Positions 614-731 constitute a C-type lectin domain; that stretch reads FTDKCYYFSV…CDEINNFICE (118 aa). Ca(2+) is bound by residues Phe-644, Asn-646, Glu-650, Asp-670, and Glu-674. A carbohydrate contacts are provided by Lys-691, Gln-694, and Asp-696. Positions 694, 696, 697, 706, 707, 718, 719, and 731 each coordinate Ca(2+). Position 706 (Glu-706) interacts with a carbohydrate. A carbohydrate contacts are provided by Asn-718 and Asp-719.

In terms of assembly, the extracellular domain forms a stable trimer. The extracellular domain interacts with fibrillar amyloid-beta peptide. As to expression, highly expressed in lung, spleen, small and large intestine, stomach and brain. Expressed in neonatal microglia.

The protein resides in the membrane. Functionally, scavenger receptor that displays several functions associated with host defense. Promotes binding and phagocytosis of Gram-positive, Gram-negative bacteria and yeast. Mediates the recognition, internalization and degradation of oxidatively modified low density lipoprotein (oxLDL) by vascular endothelial cells. Binds to several carbohydrates including Gal-type ligands, D-galactose, L- and D-fucose, GalNAc, T and Tn antigens in a calcium-dependent manner and internalizes specifically GalNAc in nurse-like cells. Also binds to sialyl Lewis X or a trisaccharide and asialo-orosomucoid (ASOR). The sequence is that of Collectin-12 (Colec12) from Rattus norvegicus (Rat).